We begin with the raw amino-acid sequence, 396 residues long: MSRLQQVTVLGATGSVGLSSLDVIARHPDRYQVFALTGFTRMSELLALCVRHAPRFAVVPEAAAARTLQDDLRAAGLATQVLVGEEGLCQVSADAEVDTVVAAIVGAAGLRPTLAAVDAGKKILLANKEALVMSGALFMQAVRKSGAVLLPLDSEHNAIFQCMPGDYARGLSQVGVRRILLTASGGPFRKTPLAELEQVSPDQACAHPNWSMGRKISVDSASMMNKGLELIEACWLFDARPDQVEVVIHPQSVIHSLVDYVDGSVLAQLGNPDMRTPIANALAWPERIDSGVAPLDLFAVARLDFEAPDEQRFPCLRLARQAAEAGNSAPAMLNAANEVAVAAFLERRIRFPQIASIIEDVLALEPVVTVSDLGAVFEADTKARALAEQWLNRNVR.

Thr-13, Gly-14, Ser-15, Val-16, and Asn-127 together coordinate NADPH. Lys-128 lines the 1-deoxy-D-xylulose 5-phosphate pocket. An NADPH-binding site is contributed by Glu-129. Residue Asp-153 coordinates Mn(2+). Residues Ser-154, Glu-155, Ser-184, and His-207 each coordinate 1-deoxy-D-xylulose 5-phosphate. Glu-155 serves as a coordination point for Mn(2+). Gly-213 serves as a coordination point for NADPH. Residues Ser-220, Asn-225, Lys-226, and Glu-229 each coordinate 1-deoxy-D-xylulose 5-phosphate. Glu-229 serves as a coordination point for Mn(2+).

The protein belongs to the DXR family. Mg(2+) serves as cofactor. Requires Mn(2+) as cofactor.

It catalyses the reaction 2-C-methyl-D-erythritol 4-phosphate + NADP(+) = 1-deoxy-D-xylulose 5-phosphate + NADPH + H(+). It participates in isoprenoid biosynthesis; isopentenyl diphosphate biosynthesis via DXP pathway; isopentenyl diphosphate from 1-deoxy-D-xylulose 5-phosphate: step 1/6. Its function is as follows. Catalyzes the NADPH-dependent rearrangement and reduction of 1-deoxy-D-xylulose-5-phosphate (DXP) to 2-C-methyl-D-erythritol 4-phosphate (MEP). This Pseudomonas fluorescens (strain SBW25) protein is 1-deoxy-D-xylulose 5-phosphate reductoisomerase.